A 610-amino-acid polypeptide reads, in one-letter code: Zinc metalloproteinase-disintegrin-like bothropasin (610 aa).

Positions 1–20 are cleaved as a signal peptide; sequence MIEVLLVTICLAAFPYQGSS. Positions 21 to 191 are excised as a propeptide; sequence IILESGNVND…ASQLVVTAEQ (171 aa). Residue Q192 is modified to Pyrrolidone carboxylic acid. The Peptidase M12B domain occupies 198–394; the sequence is RYVELFIVVD…ENPQCILNEP (197 aa). E201 and D285 together coordinate Ca(2+). Disulfide bonds link C309–C389, C349–C373, and C351–C356. H334 serves as a coordination point for Zn(2+). Residue E335 is part of the active site. Zn(2+)-binding residues include H338 and H344. N372 carries N-linked (GlcNAc...) asparagine glycosylation. Ca(2+)-binding residues include C389, N392, V404, N407, L409, E411, E414, and D417. One can recognise a Disintegrin domain in the interval 402-488; that stretch reads PPVCGNELLE…ECPADVFHKN (87 aa). 22 disulfides stabilise this stretch: C405-C424, C405-C434, C416-C429, C416-C434, C418-C424, C428-C451, C442-C448, C447-C473, C460-C480, C467-C492, C467-C499, C492-C504, C499-C504, C511-C526, C511-C561, C526-C572, C539-C549, C549-C556, C556-C598, C561-C572, C592-C603, and C598-C603. The short motif at 466–468 is the D/ECD-tripeptide element; sequence ECD. Residues D468, P469, E471, D483, and V484 each coordinate Ca(2+).

This sequence belongs to the venom metalloproteinase (M12B) family. P-III subfamily. P-IIIb sub-subfamily. As to quaternary structure, monomer. It depends on Zn(2+) as a cofactor. In terms of tissue distribution, expressed by the venom gland.

The protein resides in the secreted. The catalysed reaction is Cleavage of 5-His-|-Leu-6, 10-His-|-Leu-11, 14-Ala-|-Leu-15, 16-Tyr-|-Leu-17 and 24-Phe-|-Phe-25 in insulin B chain.. Its activity is regulated as follows. Inhibited by EDTA and EGTA. In terms of biological role, has caseinolytic activity. Causes hemorrhage on rabbit skin and causes myonecrosis in mouse tibialis anterior muscle. Functionally, inhibits platelet aggregation. This is Zinc metalloproteinase-disintegrin-like bothropasin from Bothrops jararaca (Jararaca).